Here is a 40-residue protein sequence, read N- to C-terminus: MTAKTKQSWNKGIWENGKQGSHQQTFLPKIWVNIYSTPTS.

Over residues 1–10 the composition is skewed to polar residues; the sequence is MTAKTKQSWN. Residues 1-20 form a disordered region; the sequence is MTAKTKQSWNKGIWENGKQG.

The protein resides in the cytoplasm. It localises to the cytosol. Its subcellular location is the peroxisome matrix. In terms of biological role, modulates the lysine biosynthesis pathway, possibly by stabilizing the lysine biosynthesis LYS1 protein in lysine-deplete conditions. This Saccharomyces cerevisiae (strain ATCC 204508 / S288c) (Baker's yeast) protein is Peroxisomal LYS1 stabilizing protein 1.